The chain runs to 296 residues: tRNA dimethylallyltransferase (296 aa).

11–18 is an ATP binding site; that stretch reads GPTAVGKT. Residue 13–18 coordinates substrate; that stretch reads TAVGKT. The segment at 36–39 is interaction with substrate tRNA; sequence DSQQ.

This sequence belongs to the IPP transferase family. In terms of assembly, monomer. Mg(2+) is required as a cofactor.

It carries out the reaction adenosine(37) in tRNA + dimethylallyl diphosphate = N(6)-dimethylallyladenosine(37) in tRNA + diphosphate. Its function is as follows. Catalyzes the transfer of a dimethylallyl group onto the adenine at position 37 in tRNAs that read codons beginning with uridine, leading to the formation of N6-(dimethylallyl)adenosine (i(6)A). In Streptococcus equi subsp. equi (strain 4047), this protein is tRNA dimethylallyltransferase.